A 1133-amino-acid polypeptide reads, in one-letter code: RNA-dependent RNA polymerase 2 (1133 aa).

Mg(2+) is bound by residues Asp-830, Asp-832, and Asp-834.

It belongs to the RdRP family. As to quaternary structure, interacts with NRPD1 and SHH1. Associates with Pol IV complex, forming an interpolymerase channel bridging their active sites, through which the Pol IV-generated transcript is handed over to the RDR2 active site after being backtracked, where it is used as the template for double-stranded RNA (dsRNA) synthesis. Interacts with JMJ24.

Its subcellular location is the nucleus. It localises to the nucleoplasm. It is found in the nucleolus. The enzyme catalyses RNA(n) + a ribonucleoside 5'-triphosphate = RNA(n+1) + diphosphate. In terms of biological role, RNA-dependent direct polymerase involved in the production of small interfering RNAs (siRNAs). Binds to single-stranded RNA (ssRNA); engages ssRNAs longer than 7 nucleotides and initiates internal to their 3' ends. Able to transcribe the RNA of an RNA/DNA hybrid, the transcript produced by Pol IV, if its 3' end is accessible, to generate double-stranded small interfering RNAs (dsRNAs) precursor essential for establishing and maintaining DNA methylation. Required for the biogenesis of endogenous siRNAs of 24 nucleotide which derive from heterochromatin and DNA repeats such as transposons or endogenous gene tandem repeats, such as repeats present in FWA gene. Involved in transcriptional gene silencing (TGS). Component of the RNA-directed DNA methylation (RdDM) silencing pathway that utilizes siRNAs to guide DNA methyltransferases to asymmetric cytosines. Involved in control of flowering time through RdDM of FWA locus. Required for reception of long-distance mRNA silencing in the shoot. Required for the formation of telomeric siRNAs and the RNA-dependent DNA methylation of asymmetric cytosines in telomeric (5'-CCCTAAA-3') repeats. The polypeptide is RNA-dependent RNA polymerase 2 (Arabidopsis thaliana (Mouse-ear cress)).